We begin with the raw amino-acid sequence, 258 residues long: Ubiquinone/menaquinone biosynthesis C-methyltransferase UbiE (258 aa).

S-adenosyl-L-methionine-binding positions include Thr81, Asp102, and 130–131; that span reads NA.

It belongs to the class I-like SAM-binding methyltransferase superfamily. MenG/UbiE family.

It catalyses the reaction a 2-demethylmenaquinol + S-adenosyl-L-methionine = a menaquinol + S-adenosyl-L-homocysteine + H(+). It carries out the reaction a 2-methoxy-6-(all-trans-polyprenyl)benzene-1,4-diol + S-adenosyl-L-methionine = a 5-methoxy-2-methyl-3-(all-trans-polyprenyl)benzene-1,4-diol + S-adenosyl-L-homocysteine + H(+). Its pathway is quinol/quinone metabolism; menaquinone biosynthesis; menaquinol from 1,4-dihydroxy-2-naphthoate: step 2/2. It functions in the pathway cofactor biosynthesis; ubiquinone biosynthesis. In terms of biological role, methyltransferase required for the conversion of demethylmenaquinol (DMKH2) to menaquinol (MKH2) and the conversion of 2-polyprenyl-6-methoxy-1,4-benzoquinol (DDMQH2) to 2-polyprenyl-3-methyl-6-methoxy-1,4-benzoquinol (DMQH2). In Rhizobium rhizogenes (strain K84 / ATCC BAA-868) (Agrobacterium radiobacter), this protein is Ubiquinone/menaquinone biosynthesis C-methyltransferase UbiE.